A 400-amino-acid chain; its full sequence is MGGWSSKPRQGMGTNLSVPNPLGFFPDHQLDPAFGANSNNPDWDFNPNKDRWPEANQVGAGAFGPGYPPPHGGLLGWSPQAQGILTTVPAAPPPASTNRQSGRQPTPISPPLRDSHPQAMQWNSTTFHQVLLDPRVRGLYFPPGGSSSGTVNPVPTTASPISSISSRTGDPAPNMESTTSGFLGPLLVLQAGFFLLTRILTIPQSLDSWWTSLNFLGGAPTCPGQNSQSPTSNHSPTSCPPICPGYRWMCLRRFIIFLFILLLCLIFLLVLLDYQGMLPVCPLLPGTSTTSTGPCKTCTIPAQGTSMFPSCCCTKPSDGNCTCIPIPSSWAFARFLWEGASVRFSWLSLLVPFVQWFVGLSPTVWLSVIWMMWYWGPSLYNILSPFLPLLPIFFCLWVYI.

The residue at position 1 (Met-1) is an N-acetylmethionine. 3 disordered regions span residues 1 to 64 (MGGW…GAFG), 85 to 118 (LTTV…SHPQ), and 143 to 174 (PGGS…PAPN). Gly-2 carries N-myristoyl glycine; by host lipidation. A pre-S1 region spans residues 2–119 (GGWSSKPRQG…PPLRDSHPQA (118 aa)). Positions 2–174 (GGWSSKPRQG…SSRTGDPAPN (173 aa)) are pre-S. Topologically, residues 2 to 181 (GGWSSKPRQG…APNMESTTSG (180 aa)) are virion surface; in external conformation. Topologically, residues 2-253 (GGWSSKPRQG…PGYRWMCLRR (252 aa)) are intravirion; in internal conformation. An N-linked (GlcNAc...) asparagine glycan is attached at Trp-4. Positions 96–106 (STNRQSGRQPT) are enriched in polar residues. The interval 120–174 (MQWNSTTFHQVLLDPRVRGLYFPPGGSSSGTVNPVPTTASPISSISSRTGDPAPN) is pre-S2. Low complexity predominate over residues 155–166 (PTTASPISSISS). Residues 182 to 202 (FLGPLLVLQAGFFLLTRILTI) form a helical membrane-spanning segment. The Intravirion; in external conformation segment spans residues 203 to 253 (PQSLDSWWTSLNFLGGAPTCPGQNSQSPTSNHSPTSCPPICPGYRWMCLRR). A helical membrane pass occupies residues 254-274 (FIIFLFILLLCLIFLLVLLDY). Over 275–348 (QGMLPVCPLL…GASVRFSWLS (74 aa)) the chain is Virion surface. A glycan (N-linked (GlcNAc...) asparagine; by host) is linked at Asn-320. A helical membrane pass occupies residues 349 to 369 (LLVPFVQWFVGLSPTVWLSVI). The Intravirion segment spans residues 370–375 (WMMWYW). The chain crosses the membrane as a helical span at residues 376 to 398 (GPSLYNILSPFLPLLPIFFCLWV). Residues 399-400 (YI) are Virion surface-facing.

It belongs to the orthohepadnavirus major surface antigen family. In terms of assembly, in its internal form (Li-HBsAg), interacts with the capsid protein and with the isoform S. Interacts with host chaperone CANX. Associates with host chaperone CANX through its pre-S2 N glycan; this association may be essential for isoform M proper secretion. As to quaternary structure, interacts with isoform L. Interacts with the antigens of satellite virus HDV (HDVAgs); this interaction is required for encapsidation of HDV genomic RNA. In terms of processing, isoform M is N-terminally acetylated by host at a ratio of 90%, and N-glycosylated by host at the pre-S2 region. Myristoylated.

It localises to the virion membrane. Functionally, the large envelope protein exists in two topological conformations, one which is termed 'external' or Le-HBsAg and the other 'internal' or Li-HBsAg. In its external conformation the protein attaches the virus to cell receptors and thereby initiating infection. This interaction determines the species specificity and liver tropism. This attachment induces virion internalization predominantly through caveolin-mediated endocytosis. The large envelope protein also assures fusion between virion membrane and endosomal membrane. In its internal conformation the protein plays a role in virion morphogenesis and mediates the contact with the nucleocapsid like a matrix protein. The middle envelope protein plays an important role in the budding of the virion. It is involved in the induction of budding in a nucleocapsid independent way. In this process the majority of envelope proteins bud to form subviral lipoprotein particles of 22 nm of diameter that do not contain a nucleocapsid. The sequence is that of Large envelope protein from Homo sapiens (Human).